Here is a 94-residue protein sequence, read N- to C-terminus: Putative regulatory protein LEPBI_I0950 (94 aa).

Belongs to the RemA family.

The sequence is that of Putative regulatory protein LEPBI_I0950 from Leptospira biflexa serovar Patoc (strain Patoc 1 / ATCC 23582 / Paris).